The following is a 113-amino-acid chain: Ribosome-associated factor Y (113 aa).

Residue K66 is modified to N6-acetyllysine. The tract at residues K91–E113 is disordered.

The protein belongs to the HPF/YfiA ribosome-associated protein family. YfiA subfamily. In terms of assembly, associates mainly with 70S ribosomes.

Functionally, during stationary phase, prevents 70S dimer formation, probably in order to regulate translation efficiency during transition between the exponential and the stationary phases. In addition, during environmental stress such as cold shock or excessive cell density at stationary phase, stabilizes the 70S ribosome against dissociation, inhibits translation initiation and increase translation accuracy. When normal growth conditions are restored, is quickly released from the ribosome. The protein is Ribosome-associated factor Y of Escherichia coli O157:H7.